A 136-amino-acid polypeptide reads, in one-letter code: DNA-directed RNA polymerase subunit omega (136 aa).

The segment covering 90-102 has biased composition (low complexity); sequence SSPAAAAVAPQSS. The tract at residues 90-136 is disordered; it reads SSPAAAAVAPQSSSDDKDVQFDRMSEEDLLRGLENLAPPTETDDEGE. The span at 103–120 shows a compositional bias: basic and acidic residues; that stretch reads SDDKDVQFDRMSEEDLLR.

Belongs to the RNA polymerase subunit omega family. In terms of assembly, the RNAP catalytic core consists of 2 alpha, 1 beta, 1 beta' and 1 omega subunit. When a sigma factor is associated with the core the holoenzyme is formed, which can initiate transcription.

The catalysed reaction is RNA(n) + a ribonucleoside 5'-triphosphate = RNA(n+1) + diphosphate. In terms of biological role, promotes RNA polymerase assembly. Latches the N- and C-terminal regions of the beta' subunit thereby facilitating its interaction with the beta and alpha subunits. The sequence is that of DNA-directed RNA polymerase subunit omega from Methylorubrum populi (strain ATCC BAA-705 / NCIMB 13946 / BJ001) (Methylobacterium populi).